The sequence spans 341 residues: Protein-glutamate methylesterase/protein-glutamine glutaminase 1 (341 aa).

The region spanning 2 to 119 (KVGIVNDSAL…SDAKLTAGPL (118 aa)) is the Response regulatory domain. 4-aspartylphosphate is present on aspartate 53. The region spanning 146–331 (TLAASRLVAI…LTAIAPRLVQ (186 aa)) is the CheB-type methylesterase domain. Catalysis depends on residues serine 158, histidine 185, and aspartate 278.

Belongs to the CheB family. Post-translationally, phosphorylated by CheA. Phosphorylation of the N-terminal regulatory domain activates the methylesterase activity.

It is found in the cytoplasm. The enzyme catalyses [protein]-L-glutamate 5-O-methyl ester + H2O = L-glutamyl-[protein] + methanol + H(+). The catalysed reaction is L-glutaminyl-[protein] + H2O = L-glutamyl-[protein] + NH4(+). Functionally, involved in chemotaxis. Part of a chemotaxis signal transduction system that modulates chemotaxis in response to various stimuli. Catalyzes the demethylation of specific methylglutamate residues introduced into the chemoreceptors (methyl-accepting chemotaxis proteins or MCP) by CheR. Also mediates the irreversible deamidation of specific glutamine residues to glutamic acid. This chain is Protein-glutamate methylesterase/protein-glutamine glutaminase 1, found in Cupriavidus pinatubonensis (strain JMP 134 / LMG 1197) (Cupriavidus necator (strain JMP 134)).